The following is a 508-amino-acid chain: MDHPHPSTFSLGLSQILVCLALLYAAIHILSVYRRLCHISGPFWARISNLPRVWWVNTSRAHEIHQQLHEKYGDVVRFGPNMVSLRNPTWIPTVYPTRMGVKKSDFYRTLAPYTPSGALPAVFSSRDEEVHRGLRGPIASLYSMSKVLPLEVFVDRTIDVLVRQLDGRFAGAGETFDLASWLQFFAFDVMGTLTFSKRYGFLEKGMDVHGMLDTIWRFLKGAAPFTQIPWVDEIWNKNVLATKLKGATGVSILGIVGKFVSQRQEESKAGKIDGTADRDMLSLFMEIQKNNQLPPWYVTAWTFSNITAGSDSAAVVMRTVFYNLLSHPSTLQKLRSELLSAGPLTQPYPSWKDVCNLPYLDACILEALRLHPPFCLPFERIVPQGGMVLGDTYFPEGTVVGMSPWVVNRHKPTFGEDSDVWNPERWMVSKELKSKREAAVLTFGAGRRVCLGRHIAILELKKIVPALVLRYDFELIDPERFTTENFWFFRQRGMDVRVKKRMQAEAGI.

The chain crosses the membrane as a helical span at residues 9 to 29 (FSLGLSQILVCLALLYAAIHI). N-linked (GlcNAc...) asparagine glycosylation is found at Asn57 and Asn305. Cys450 serves as a coordination point for heme.

The protein belongs to the cytochrome P450 family. Heme serves as cofactor.

Its subcellular location is the membrane. It participates in secondary metabolite biosynthesis. Cytochrome P450 monooxygenase; part of the gene cluster that mediates the biosynthesis of aspernidine A, a prenylated isoindolinone. The starting point of the biosynthesis of aspernidin A is the production of orsellinaldehyde by the non-reducing polyketide synthase pkfA. Hydroxylation, methylation of one of the phenol groups, and prenylation, presumably catalyzed by the prenyltransferase pkfE, would be needed to yield aspernidine D. Subsequently, the cytochrome P450 monooxygenase pkfB is responsible for hydroxylation of aspernidine D to yield aspernidine E. The dehydrogenase pkfF may be responsible for further oxidation of aspernidine E to form a dialdehyde intermediate which is further transformed in a series of steps, some of which are enzyme-mediated, to generate aspernidine A. The possibility that additional enzymes outside of the cluster are involved in aspernidine A biosynthesis cannot be excluded. This Emericella nidulans (strain FGSC A4 / ATCC 38163 / CBS 112.46 / NRRL 194 / M139) (Aspergillus nidulans) protein is Cytochrome P450 monooxygenase pkfB.